The chain runs to 223 residues: Large ribosomal subunit protein uL3 (223 aa).

This sequence belongs to the universal ribosomal protein uL3 family. In terms of assembly, part of the 50S ribosomal subunit. Forms a cluster with proteins L14 and L19.

Functionally, one of the primary rRNA binding proteins, it binds directly near the 3'-end of the 23S rRNA, where it nucleates assembly of the 50S subunit. The protein is Large ribosomal subunit protein uL3 of Mycoplasma capricolum subsp. capricolum (strain California kid / ATCC 27343 / NCTC 10154).